The sequence spans 583 residues: Glucosidase 2 subunit beta (583 aa).

The N-terminal stretch at 1–26 is a signal peptide; the sequence is MVRLNLAVVALAAGALSASASASSSA. C91 and C115 are oxidised to a cystine. The stretch at 130 to 252 forms a coiled coil; it reads NRCEKVGKEY…LTLLLDDLAK (123 aa). The region spanning 455-562 is the MRH domain; that stretch reads NKCFSKDMGE…KVATPAVCFP (108 aa). 3 cysteine pairs are disulfide-bonded: C457-C470, C519-C548, and C533-C560. The Prevents secretion from ER signature appears at 580-583; that stretch reads KDEL.

As to quaternary structure, heterodimer of a catalytic subunit alpha and a subunit beta.

Its subcellular location is the endoplasmic reticulum. Functionally, subunit of glucosidase 2, which cleaves sequentially the 2 innermost alpha-1,3-linked glucose residues from the Glc(2)Man(9)GlcNAc(2) oligosaccharide precursor of immature glycoproteins in the endoplasmic reticulum (ER). Specifically required for the cleavage of the final glucose. The subunit beta retains the catalytic subunit alpha in the ER. This Mycosarcoma maydis (Corn smut fungus) protein is Glucosidase 2 subunit beta.